The following is a 750-amino-acid chain: Phosphoribosylformylglycinamidine synthase subunit PurL (750 aa).

The active site involves H54. Residues Y57 and K101 each coordinate ATP. E103 provides a ligand contact to Mg(2+). Substrate-binding positions include 104–107 (SHNH) and R126. H105 (proton acceptor) is an active-site residue. D127 is a Mg(2+) binding site. Residue Q251 coordinates substrate. D279 serves as a coordination point for Mg(2+). Residue 323 to 325 (ESQ) coordinates substrate. Positions 509 and 546 each coordinate ATP. N547 contributes to the Mg(2+) binding site. Substrate is bound at residue S549.

Belongs to the FGAMS family. As to quaternary structure, monomer. Part of the FGAM synthase complex composed of 1 PurL, 1 PurQ and 2 PurS subunits.

It is found in the cytoplasm. The enzyme catalyses N(2)-formyl-N(1)-(5-phospho-beta-D-ribosyl)glycinamide + L-glutamine + ATP + H2O = 2-formamido-N(1)-(5-O-phospho-beta-D-ribosyl)acetamidine + L-glutamate + ADP + phosphate + H(+). The protein operates within purine metabolism; IMP biosynthesis via de novo pathway; 5-amino-1-(5-phospho-D-ribosyl)imidazole from N(2)-formyl-N(1)-(5-phospho-D-ribosyl)glycinamide: step 1/2. Its function is as follows. Part of the phosphoribosylformylglycinamidine synthase complex involved in the purines biosynthetic pathway. Catalyzes the ATP-dependent conversion of formylglycinamide ribonucleotide (FGAR) and glutamine to yield formylglycinamidine ribonucleotide (FGAM) and glutamate. The FGAM synthase complex is composed of three subunits. PurQ produces an ammonia molecule by converting glutamine to glutamate. PurL transfers the ammonia molecule to FGAR to form FGAM in an ATP-dependent manner. PurS interacts with PurQ and PurL and is thought to assist in the transfer of the ammonia molecule from PurQ to PurL. In Cutibacterium acnes (strain DSM 16379 / KPA171202) (Propionibacterium acnes), this protein is Phosphoribosylformylglycinamidine synthase subunit PurL.